A 1128-amino-acid polypeptide reads, in one-letter code: Testis-expressed protein 2 (1128 aa).

3 disordered regions span residues 1-28, 71-99, and 130-279; these read MTSL…VQRS, AKED…GLSV, and PLAL…FFKV. The segment covering 130 to 186 has biased composition (low complexity); sequence PLALSPGSSSSGPLASSPSVSSLSEQKTSSSSPLSSPSKSPVLSSSASSSALSSAKP. Ser-195 carries the post-translational modification Phosphoserine. The span at 248–274 shows a compositional bias: polar residues; sequence QFTQPRNTGGDSKTAPSSPLTSPSDTR. Thr-261 is subject to Phosphothreonine. 4 positions are modified to phosphoserine: Ser-264, Ser-265, Ser-269, and Ser-294. Residues 345–387 form a disordered region; it reads KEEEGDSEGEGYGSDSNTSRSDHLKPTEDASKEVEPKGSQASS. Residues 364 to 380 are compositionally biased toward basic and acidic residues; sequence RSDHLKPTEDASKEVEP. Helical transmembrane passes span 473 to 493 and 495 to 515; these read TLGF…PYYM and GLFL…WFFT. N-linked (GlcNAc...) asparagine glycosylation is present at Asn-593. Residues 645 to 671 show a composition bias toward basic and acidic residues; it reads SKAQSDKEATEEKPPPEKELPSEDLKK. Disordered regions lie at residues 645–688, 716–765, 787–821, and 945–981; these read SKAQ…DPIL, RKPA…QKEL, QDNR…EEEQ, and ADSD…GYVG. Phosphoserine is present on residues Ser-733, Ser-739, Ser-745, Ser-749, Ser-752, Ser-799, and Ser-816. Over residues 736–751 the composition is skewed to low complexity; that stretch reads SSPSGHLSHSRSSSKG. A compositionally biased stretch (polar residues) spans 796-806; that stretch reads PVQSAESSPTA. The 286-residue stretch at 817-1102 folds into the SMP-LTD domain; the sequence is EEEEQEAWVN…MPNMDDVYIP (286 aa). Residues 946–963 show a composition bias toward acidic residues; the sequence is DSDEESSSAGSSEEDDPP.

The protein resides in the endoplasmic reticulum membrane. Its subcellular location is the nucleus membrane. In terms of biological role, during endoplasmic reticulum (ER) stress or when cellular ceramide levels increase, may induce contacts between the ER and medial-Golgi complex to facilitate non-vesicular transport of ceramides from the ER to the Golgi complex where they are converted to complex sphingolipids, preventing toxic ceramide accumulation. This is Testis-expressed protein 2 (Tex2) from Mus musculus (Mouse).